Here is a 236-residue protein sequence, read N- to C-terminus: Small ribosomal subunit protein uS2c (236 aa).

Belongs to the universal ribosomal protein uS2 family.

The protein localises to the plastid. It is found in the chloroplast. The protein is Small ribosomal subunit protein uS2c (rps2) of Eucalyptus globulus subsp. globulus (Tasmanian blue gum).